Consider the following 113-residue polypeptide: Cell division protein FtsB (113 aa).

Topologically, residues 1-3 (MRL) are cytoplasmic. The helical transmembrane segment at 4-21 (ISLLLFVLLLAIQYPLWL) threads the bilayer. Residues 22 to 113 (GKGGWLRVWE…PNSPAATGRH (92 aa)) are Periplasmic-facing. Residues 34-63 (HQVQEQATRNQMLKLRNAKLEGEVKDLQDG) adopt a coiled-coil conformation. The tract at residues 93 to 113 (KVSATPPLPPPPNSPAATGRH) is disordered.

It belongs to the FtsB family. Part of a complex composed of FtsB, FtsL and FtsQ.

It is found in the cell inner membrane. In terms of biological role, essential cell division protein. May link together the upstream cell division proteins, which are predominantly cytoplasmic, with the downstream cell division proteins, which are predominantly periplasmic. The sequence is that of Cell division protein FtsB from Cupriavidus pinatubonensis (strain JMP 134 / LMG 1197) (Cupriavidus necator (strain JMP 134)).